The chain runs to 321 residues: uncharacterized protein (321 aa).

The signal sequence occupies residues 1–22; sequence MKSIYKYTFMLFVFLFGTLMMA.

Belongs to the bacterial solute-binding protein 1 family. WtpA subfamily.

This is an uncharacterized protein from Petrotoga mobilis (strain DSM 10674 / SJ95).